The primary structure comprises 73 residues: Translation initiation factor IF-1 (73 aa).

In terms of domain architecture, S1-like spans 1–73 (MSKKKDVIEM…TRGRITYRYK (73 aa)).

Belongs to the IF-1 family. As to quaternary structure, component of the 30S ribosomal translation pre-initiation complex which assembles on the 30S ribosome in the order IF-2 and IF-3, IF-1 and N-formylmethionyl-tRNA(fMet); mRNA recruitment can occur at any time during PIC assembly.

The protein localises to the cytoplasm. Functionally, one of the essential components for the initiation of protein synthesis. Stabilizes the binding of IF-2 and IF-3 on the 30S subunit to which N-formylmethionyl-tRNA(fMet) subsequently binds. Helps modulate mRNA selection, yielding the 30S pre-initiation complex (PIC). Upon addition of the 50S ribosomal subunit IF-1, IF-2 and IF-3 are released leaving the mature 70S translation initiation complex. The sequence is that of Translation initiation factor IF-1 from Roseiflexus castenholzii (strain DSM 13941 / HLO8).